Here is a 445-residue protein sequence, read N- to C-terminus: Exodeoxyribonuclease 7 large subunit (445 aa).

It belongs to the XseA family. In terms of assembly, heterooligomer composed of large and small subunits.

It localises to the cytoplasm. It carries out the reaction Exonucleolytic cleavage in either 5'- to 3'- or 3'- to 5'-direction to yield nucleoside 5'-phosphates.. Functionally, bidirectionally degrades single-stranded DNA into large acid-insoluble oligonucleotides, which are then degraded further into small acid-soluble oligonucleotides. The protein is Exodeoxyribonuclease 7 large subunit of Xanthomonas euvesicatoria pv. vesicatoria (strain 85-10) (Xanthomonas campestris pv. vesicatoria).